The sequence spans 113 residues: ATP synthase epsilon chain (113 aa).

It belongs to the ATPase epsilon chain family. As to quaternary structure, F-type ATPases have 2 components, CF(1) - the catalytic core - and CF(0) - the membrane proton channel. CF(1) has five subunits: alpha(3), beta(3), gamma(1), delta(1), epsilon(1). CF(0) has three main subunits: a, b and c.

Its subcellular location is the cell membrane. Its function is as follows. Produces ATP from ADP in the presence of a proton gradient across the membrane. In Wolbachia pipientis subsp. Culex pipiens (strain wPip), this protein is ATP synthase epsilon chain.